The sequence spans 530 residues: tRNA-2-methylthio-N(6)-dimethylallyladenosine synthase (530 aa).

Positions 19–134 (RTYEVRTYGC…LPTLLERARH (116 aa)) constitute an MTTase N-terminal domain. [4Fe-4S] cluster is bound by residues Cys-28, Cys-63, Cys-97, Cys-171, Cys-175, and Cys-178. The Radical SAM core domain maps to 157–387 (RDEIASGWVS…TALQERISHE (231 aa)). The region spanning 390–460 (QRVVGRTVEV…PFHLIADSVD (71 aa)) is the TRAM domain. The interval 509-530 (VPTTASTSAPVGDGSAHPRHRA) is disordered.

This sequence belongs to the methylthiotransferase family. MiaB subfamily. As to quaternary structure, monomer. The cofactor is [4Fe-4S] cluster.

It is found in the cytoplasm. The catalysed reaction is N(6)-dimethylallyladenosine(37) in tRNA + (sulfur carrier)-SH + AH2 + 2 S-adenosyl-L-methionine = 2-methylsulfanyl-N(6)-dimethylallyladenosine(37) in tRNA + (sulfur carrier)-H + 5'-deoxyadenosine + L-methionine + A + S-adenosyl-L-homocysteine + 2 H(+). Functionally, catalyzes the methylthiolation of N6-(dimethylallyl)adenosine (i(6)A), leading to the formation of 2-methylthio-N6-(dimethylallyl)adenosine (ms(2)i(6)A) at position 37 in tRNAs that read codons beginning with uridine. The sequence is that of tRNA-2-methylthio-N(6)-dimethylallyladenosine synthase from Clavibacter sepedonicus (Clavibacter michiganensis subsp. sepedonicus).